Here is a 91-residue protein sequence, read N- to C-terminus: Preprofallaxidin-2 (91 aa).

The first 22 residues, M1–C22, serve as a signal peptide directing secretion. A propeptide spanning residues E23 to R49 is cleaved from the precursor. Positions K24–R49 are disordered. Positions G31 to H41 are enriched in acidic residues. L65 carries the post-translational modification Leucine amide. A propeptide spanning residues S69–R73 is cleaved from the precursor. L89 carries the post-translational modification Leucine amide.

Belongs to the frog skin active peptide (FSAP) family. Dermaseptin subfamily. In terms of tissue distribution, expressed by the skin glands.

Its subcellular location is the secreted. In terms of biological role, fallaxidin-3.1 shows antibacterial activity against the Gram-positive bacteria E.faecalis (MIC=100 uM) and L.lactis (MIC=100 uM). No antibacterial activity against the Gram-positive bacteria B.cereus, L.innocua, M.luteus, S.epidermidis, S.uberis and S.aureus, or the Gram-negative bacteria E.cloacae and E.coli. Its function is as follows. Fallaxidin-3.2 shows antibacterial activity against the Gram-positive bacteria E.faecalis (MIC=100 uM) and L.lactis (MIC=500 uM). No antibacterial activity against the Gram-positive bacteria B.cereus, L.innocua, M.luteus, S.epidermidis, S.uberis and S.aureus, or the Gram-negative bacteria E.cloacae and E.coli. The sequence is that of Preprofallaxidin-2 from Litoria fallax (Eastern dwarf tree frog).